Consider the following 108-residue polypeptide: Nucleoid-associated protein HEAR1046 (108 aa).

The tract at residues 86–108 is disordered; that stretch reads TSQEKMAGATAGMPMPPGFKMPF. Residues 99-108 are compositionally biased toward pro residues; sequence PMPPGFKMPF.

The protein belongs to the YbaB/EbfC family. Homodimer.

Its subcellular location is the cytoplasm. It localises to the nucleoid. Its function is as follows. Binds to DNA and alters its conformation. May be involved in regulation of gene expression, nucleoid organization and DNA protection. The sequence is that of Nucleoid-associated protein HEAR1046 from Herminiimonas arsenicoxydans.